Consider the following 470-residue polypeptide: Cell division protein FtsP (470 aa).

The segment at residues 1-27 (MSFSRRQFLQASGIALCAGAIPLRANA) is a signal peptide (tat-type signal). Residues 222 to 287 (VEVSRGWVRL…RREILVDMTN (66 aa)) form the Plastocyanin-like domain.

It belongs to the FtsP family. Post-translationally, predicted to be exported by the Tat system. The position of the signal peptide cleavage has not been experimentally proven.

The protein localises to the periplasm. Cell division protein that is required for growth during stress conditions. May be involved in protecting or stabilizing the divisomal assembly under conditions of stress. This chain is Cell division protein FtsP, found in Salmonella typhi.